Here is a 242-residue protein sequence, read N- to C-terminus: E3 ubiquitin-protein ligase AIRP2 (242 aa).

Residues 146–184 (CGICLEIRNKVVLPTCNHSMCINCYRNWRARSQSCPFCR) form an RING-type zinc finger.

As to quaternary structure, interacts with ATP1/SDIRIP1. Expressed in germinating seeds, flower organs and siliques.

It localises to the cytoplasm. The protein localises to the cytosol. It carries out the reaction S-ubiquitinyl-[E2 ubiquitin-conjugating enzyme]-L-cysteine + [acceptor protein]-L-lysine = [E2 ubiquitin-conjugating enzyme]-L-cysteine + N(6)-ubiquitinyl-[acceptor protein]-L-lysine.. Its function is as follows. Possesses E3 ubiquitin-protein ligase activity in vitro when associated with the E2 enzyme UBC8 in vitro. Plays combinatory roles with AIRP1 in the positive regulation of the abscisic acid-mediated drought stress response. Plays a positive role in abscisic acid- and high salinity-regulated seed germination through the ubiquitin-proteasome-dependent down-regulation of ATP1/SDIRIP1. The sequence is that of E3 ubiquitin-protein ligase AIRP2 from Arabidopsis thaliana (Mouse-ear cress).